The following is a 533-amino-acid chain: Probable ribonuclease ZC3H12D (533 aa).

Positions 92 to 246 (LRPIVIDGSN…PLGRRGPTLS (155 aa)) constitute an RNase NYN domain. The segment at 251-282 (KKPRPPEPSWQHCPYGKKCTYGVKCRFYHPER) adopts a C3H1-type zinc-finger fold. The necessary for interaction with ZC3H12A stretch occupies residues 262–368 (HCPYGKKCTY…ASGVVSQSRG (107 aa)). The interval 302-335 (LGGGAEEPRTPSARSRPTTARLLPQEPGEHDLPP) is disordered.

The protein belongs to the ZC3H12 family. Interacts with ZC3H12A. The cofactor is Mg(2+). Expressed at low levels in bone marrow derived macrophages.

It localises to the cytoplasm. The protein resides in the P-body. Functionally, may regulate cell growth likely by suppressing RB1 phosphorylation. May function as RNase and regulate the levels of target RNA species (Potential). In association with ZC3H12A enhances the degradation of interleukin IL-6 mRNA level in activated macrophages. Serve as a tumor suppressor in certain leukemia cells. Overexpression inhibits the G1 to S phase progression through suppression of RB1 phosphorylation. In Mus musculus (Mouse), this protein is Probable ribonuclease ZC3H12D.